The chain runs to 340 residues: Phosphoribosylformylglycinamidine cyclo-ligase (340 aa).

This sequence belongs to the AIR synthase family.

The protein resides in the cytoplasm. The enzyme catalyses 2-formamido-N(1)-(5-O-phospho-beta-D-ribosyl)acetamidine + ATP = 5-amino-1-(5-phospho-beta-D-ribosyl)imidazole + ADP + phosphate + H(+). The protein operates within purine metabolism; IMP biosynthesis via de novo pathway; 5-amino-1-(5-phospho-D-ribosyl)imidazole from N(2)-formyl-N(1)-(5-phospho-D-ribosyl)glycinamide: step 2/2. This is Phosphoribosylformylglycinamidine cyclo-ligase from Crocosphaera subtropica (strain ATCC 51142 / BH68) (Cyanothece sp. (strain ATCC 51142)).